The primary structure comprises 698 residues: Superoxide-generating NADPH oxidase heavy chain subunit B (698 aa).

Disordered regions lie at residues 1 to 68 (MNEK…NITP) and 134 to 158 (NDQVNSNTDNNNNTNNNNNTNNNKN). Residues 1–184 (MNEKKELQQE…KIRGWWWHRG (184 aa)) are Cytoplasmic-facing. Polar residues-rich tracts occupy residues 16–25 (FQTPKNQQLE) and 33–53 (EISSTGNETSESGISSPPISQ). 2 stretches are compositionally biased toward low complexity: residues 54 to 65 (NDNSNNENESLN) and 138 to 156 (NSNTDNNNNTNNNNNTNNN). A helical transmembrane segment spans residues 185–205 (ISTYIMLFYIALNIGVGVHMF). The Extracellular portion of the chain corresponds to 206–229 (YNMYHSDIFKFLGLSFCFSRTAAR). In terms of domain architecture, Ferric oxidoreductase spans 225-375 (RTAARLINLN…LFIPFYILLC (151 aa)). The helical transmembrane segment at 230 to 250 (LINLNSAVILLPVLRNFLSWL) threads the bilayer. Residues 251–269 (RGTIVNNYIPIDKHLNFHK) are Cytoplasmic-facing. 2 residues coordinate heme: His-268 and His-282. Residues 270–290 (LCAFMLFCCTIIHCVGHYISF) traverse the membrane as a helical segment. Residues 291–324 (KKINDDVLKIDDGKSVAGDYLNININNFPDEKYL) lie on the Extracellular side of the membrane. A helical transmembrane segment spans residues 325-345 (FFKSVPGITGHIMLLILILIV). Residues 346-355 (SSSMWRIRRP) are Cytoplasmic-facing. The helical transmembrane segment at 356–376 (MFEIFWYVHHLFIPFYILLCF) threads the bilayer. Heme is bound by residues His-364 and His-377. The Extracellular segment spans residues 377-388 (HGYSKILKKDPQ). A helical membrane pass occupies residues 389–409 (SWMWIIAPFILYSIERLIRIA). One can recognise an FAD-binding FR-type domain in the interval 404–528 (RLIRIARSKK…DGPFGAPAEN (125 aa)). Residues 410–698 (RSKKRVILEK…CHLIFHKENF (289 aa)) are Cytoplasmic-facing. An FAD-binding site is contributed by 460-466 (HPFTITS).

In terms of assembly, composed of a heavy chain and a light chain. It depends on FAD as a cofactor.

The protein resides in the membrane. In terms of biological role, critical component of the membrane-bound oxidase that generates superoxide. It is the terminal component of a respiratory chain that transfers single electrons from cytoplasmic NADPH across the plasma membrane to molecular oxygen on the exterior. The protein is Superoxide-generating NADPH oxidase heavy chain subunit B (noxB) of Dictyostelium discoideum (Social amoeba).